Here is a 261-residue protein sequence, read N- to C-terminus: uncharacterized protein (261 aa).

This sequence belongs to the PaiB family.

This is an uncharacterized protein from Aspergillus fumigatus (strain ATCC MYA-4609 / CBS 101355 / FGSC A1100 / Af293) (Neosartorya fumigata).